The chain runs to 648 residues: Dystrotelin (648 aa).

The ZZ-type zinc-finger motif lies at 223–279 (QHRVHCHACKAFPITGLRYRCLKCLNVHLCQSCFLTERRSRKHKPSHSVLEYCTQPS). 8 residues coordinate Zn(2+): cysteine 228, cysteine 231, cysteine 243, cysteine 246, cysteine 252, cysteine 255, histidine 265, and histidine 269. Residues 367–446 (QRETAELQKD…LDTVRHLLSL (80 aa)) are a coiled coil. Residues 455–474 (SHSNLQLEQDGSINENNWTQ) are compositionally biased toward polar residues. 2 disordered regions span residues 455 to 509 (SHSN…DTLY) and 536 to 557 (QREE…EGLP). Over residues 479–502 (KPHESSSTEHEVEERGTRQERRFE) the composition is skewed to basic and acidic residues. The span at 538-548 (EEEELQEEEEG) shows a compositional bias: acidic residues.

Its subcellular location is the cell membrane. The sequence is that of Dystrotelin (dytn) from Danio rerio (Zebrafish).